Here is a 411-residue protein sequence, read N- to C-terminus: LIM domain-binding protein 1 (411 aa).

Position 2 is an N-acetylserine (S2). At T61 the chain carries Phosphothreonine. Phosphoserine occurs at positions 265 and 302. Disordered regions lie at residues 283 to 330 and 367 to 411; these read APPA…TFAL and DAAN…QASQ. Over residues 302 to 318 the composition is skewed to low complexity; that stretch reads SGGSTMSSGGGNTNNSN. The LIM interaction domain (LID) domain occupies 336-375; sequence DVMVVGEPTLMGGEFGDEDERLITRLENTQFDAANGIDDE.

It belongs to the LDB family. In terms of assembly, interacts with ESR1. Forms homodimers and heterodimers. Interacts with and activates LHX1/LIM1. Interacts with the LIM domains of ISL1 and LMO2. Can assemble in a complex with LMO2 and TAL1/SCL but does not interact with TAL1/SCL directly. Strongly interacts with the LIM2 domain of LMX1A and more weakly with the LIM1 domain. Homodimerization is not required for, and does not effect, LMX1A-binding. Component of a nuclear TAL-1 complex composed at least of CBFA2T3, LDB1, TAL1 and TCF3. Interacts with LHX6 and LHX9. At neuronal promoters, forms a complex with LHX3 involved in the specification of interneurons, in motor neurons, it is displaced by ISL1 to form a ternary complex in which ISL1 contacts both LHX3 and LDB1. Interacts with SLK; leading to negatively regulate SLK kinase activity. Interacts with YWHAZ. Interacts with PRDM1/BLIMP1. Interacts with LMO4. Interacts with RLIM/RNF12; the interaction inhibits the ubiquitination of LMO proteins. Ubiquitinated by RLIM/RNF12, leading to its degradation by the proteasome. In terms of tissue distribution, expressed in a wide range of adult tissues including brain, heart, skeletal muscle, colon, thymus, spleen, kidney, liver, small intestine, lung and peripheral blood leukocytes.

The protein resides in the nucleus. In terms of biological role, binds to the LIM domain of a wide variety of LIM domain-containing transcription factors. May regulate the transcriptional activity of LIM-containing proteins by determining specific partner interactions. Plays a role in the development of interneurons and motor neurons in cooperation with LHX3 and ISL1. Acts synergistically with LHX1/LIM1 in axis formation and activation of gene expression. Acts with LMO2 in the regulation of red blood cell development, maintaining erythroid precursors in an immature state. This is LIM domain-binding protein 1 (LDB1) from Homo sapiens (Human).